A 310-amino-acid chain; its full sequence is Olfactory receptor 5P53 (310 aa).

Topologically, residues 1–25 are extracellular; it reads MEAENHTTVAELIILGLTEDPKLCI. N5 is a glycosylation site (N-linked (GlcNAc...) asparagine). The chain crosses the membrane as a helical span at residues 26–46; sequence VFFVIFLGVYIVTLVGNISII. The Cytoplasmic portion of the chain corresponds to 47 to 54; it reads TLIRISSQ. A helical transmembrane segment spans residues 55 to 75; it reads LHTPMYLFLSHLAFVDILYST. Over 76–99 the chain is Extracellular; the sequence is SVSVIMHMELLGHGLALPVAACAA. A disulfide bridge connects residues C97 and C189. The chain crosses the membrane as a helical span at residues 100–120; sequence QLCITVSFGSAECFLLAAMAY. The Cytoplasmic portion of the chain corresponds to 121–133; that stretch reads DRYVAICSPLLYS. The helical transmembrane segment at 134-154 threads the bilayer; it reads TLMSPRVCFLLLGMSYVGGCM. The Extracellular portion of the chain corresponds to 155 to 196; sequence NGWTFTGCLLSLSFCGPNQIDHFFCDFSPLLKLSCSDVSIIG. A helical membrane pass occupies residues 197–217; sequence IIPSISSGSIIVVTVFVIAVS. The Cytoplasmic portion of the chain corresponds to 218–237; sequence YIYILITILNMRSTEGRHKA. Residues 238 to 258 traverse the membrane as a helical segment; that stretch reads FSTCTSHLTAVTLYYGTITFI. Residues 259 to 271 are Extracellular-facing; that stretch reads YVMPKSNYSTEQN. N-linked (GlcNAc...) asparagine glycosylation is present at N265. Residues 272–292 form a helical membrane-spanning segment; sequence KVLSVFYTVVIPMLNPLIYSL. Residues 293–310 are Cytoplasmic-facing; sequence RNRDVKEALRKATVRVYS.

The protein belongs to the G-protein coupled receptor 1 family.

The protein resides in the cell membrane. Functionally, potential odorant receptor. The sequence is that of Olfactory receptor 5P53 from Mus musculus (Mouse).